The following is a 560-amino-acid chain: Nibrin homolog (560 aa).

Residues 25-87 (YKVGRKDCDV…YGTFFNKVQG (63 aa)) enclose the FHA domain. The BRCT domain occupies 115–190 (TFRLSFVPIV…KQIVLGDWFK (76 aa)).

The protein belongs to the Nibrin family. In terms of assembly, component of the MRN complex composed of two heterodimers RAD50 and MRE11 associated with a single NBS1. As to expression, mostly expressed in the shoot apex and young flower, but also in young leaves, root tips and stamen, tissues where frequent cell division or meiosis may occur.

The protein localises to the nucleus. The protein resides in the chromosome. In terms of biological role, component of the MRN complex, which plays a central role in double-strand break (DSB) repair, DNA recombination, maintenance of telomere integrity and meiosis. The MRN complex is involved in the repair of DNA double-strand breaks (DSBs) via homologous recombination (HR), an error-free mechanism which primarily occurs during S and G2 phases. The complex (1) mediates the end resection of damaged DNA, which generates proper single-stranded DNA, a key initial steps in HR, and is (2) required for the recruitment of other repair factors and efficient activation of ATM and ATR upon DNA damage. The MRN complex possesses single-strand endonuclease activity and double-strand-specific 3'-5' exonuclease activity, which are provided by MRE11, to initiate end resection, which is required for single-strand invasion and recombination. Within the MRN complex, NBS1 acts as a protein-protein adapter, which specifically recognizes and binds phosphorylated proteins, promoting their recruitment to DNA damage sites. Recruits MRE11 and RAD50 components of the MRN complex to DSBs in response to DNA damage. The sequence is that of Nibrin homolog from Oryza sativa subsp. japonica (Rice).